The primary structure comprises 105 residues: uncharacterized protein (105 aa).

This is an uncharacterized protein from Orgyia pseudotsugata multicapsid polyhedrosis virus (OpMNPV).